Reading from the N-terminus, the 499-residue chain is Phenylalanine--tRNA ligase alpha subunit (499 aa).

Residues Thr-330, 372 to 374 (QVE), and Tyr-412 contribute to the L-phenylalanine site. Glu-414 lines the Mg(2+) pocket. Phe-438 serves as a coordination point for L-phenylalanine.

Belongs to the class-II aminoacyl-tRNA synthetase family. Phe-tRNA synthetase alpha subunit type 2 subfamily. As to quaternary structure, tetramer of two alpha and two beta subunits. Mg(2+) serves as cofactor.

It localises to the cytoplasm. The enzyme catalyses tRNA(Phe) + L-phenylalanine + ATP = L-phenylalanyl-tRNA(Phe) + AMP + diphosphate + H(+). The chain is Phenylalanine--tRNA ligase alpha subunit (frs2) from Schizosaccharomyces pombe (strain 972 / ATCC 24843) (Fission yeast).